Consider the following 249-residue polypeptide: Adenosylcobinamide-GDP ribazoletransferase (249 aa).

6 helical membrane-spanning segments follow: residues 36–56 (LVGF…HSIG), 57–77 (LNLA…GGLH), 106–126 (VGAM…AFLF), 133–153 (KLTA…LAIT), 188–208 (LWLF…ITWL), and 226–246 (GALG…GQQI).

It belongs to the CobS family. Mg(2+) serves as cofactor.

It is found in the cell membrane. It catalyses the reaction alpha-ribazole + adenosylcob(III)inamide-GDP = adenosylcob(III)alamin + GMP + H(+). It carries out the reaction alpha-ribazole 5'-phosphate + adenosylcob(III)inamide-GDP = adenosylcob(III)alamin 5'-phosphate + GMP + H(+). It participates in cofactor biosynthesis; adenosylcobalamin biosynthesis; adenosylcobalamin from cob(II)yrinate a,c-diamide: step 7/7. In terms of biological role, joins adenosylcobinamide-GDP and alpha-ribazole to generate adenosylcobalamin (Ado-cobalamin). Also synthesizes adenosylcobalamin 5'-phosphate from adenosylcobinamide-GDP and alpha-ribazole 5'-phosphate. The sequence is that of Adenosylcobinamide-GDP ribazoletransferase from Desulforamulus reducens (strain ATCC BAA-1160 / DSM 100696 / MI-1) (Desulfotomaculum reducens).